The primary structure comprises 80 residues: Phage shock protein G (80 aa).

2 helical membrane-spanning segments follow: residues 5–25 (LFVIGFFVMLMVTGVSLLGII) and 41–61 (LALMIKLLPWLLLAIAVVWVI).

It is found in the cell inner membrane. Its function is as follows. Effector of the phage shock response. The protein is Phage shock protein G (pspG) of Escherichia coli (strain K12).